A 126-amino-acid chain; its full sequence is Large ribosomal subunit protein bL12 (126 aa).

This sequence belongs to the bacterial ribosomal protein bL12 family. Homodimer. Part of the ribosomal stalk of the 50S ribosomal subunit. Forms a multimeric L10(L12)X complex, where L10 forms an elongated spine to which 2 to 4 L12 dimers bind in a sequential fashion. Binds GTP-bound translation factors.

In terms of biological role, forms part of the ribosomal stalk which helps the ribosome interact with GTP-bound translation factors. Is thus essential for accurate translation. This is Large ribosomal subunit protein bL12 from Teredinibacter turnerae (strain ATCC 39867 / T7901).